A 365-amino-acid chain; its full sequence is Probable galacturonosyltransferase-like 10 (365 aa).

At 1 to 10 the chain is on the cytoplasmic side; sequence MMSGSRLASR. Residues 11–31 form a helical; Signal-anchor for type II membrane protein membrane-spanning segment; that stretch reads LIIIFSIISTSFFTVESIRLF. Residues 32–365 are Lumenal-facing; the sequence is PDSFDDASSD…LQYNQELEIL (334 aa). Residue Asn209 is glycosylated (N-linked (GlcNAc...) asparagine).

This sequence belongs to the glycosyltransferase 8 family.

It is found in the golgi apparatus membrane. It participates in glycan metabolism; pectin biosynthesis. In terms of biological role, may be involved in pectin and/or xylans biosynthesis in cell walls. This chain is Probable galacturonosyltransferase-like 10 (GATL10), found in Arabidopsis thaliana (Mouse-ear cress).